The following is a 511-amino-acid chain: Glycerol kinase (511 aa).

Thr11 is an ADP binding site. Residues Thr11, Ser12, and Ser13 each coordinate ATP. A sn-glycerol 3-phosphate-binding site is contributed by Thr11. Arg15 provides a ligand contact to ADP. Sn-glycerol 3-phosphate-binding residues include Arg81, Glu82, Tyr133, and Asp242. 5 residues coordinate glycerol: Arg81, Glu82, Tyr133, Asp242, and Gln243. ADP contacts are provided by Thr264 and Gly321. ATP is bound by residues Thr264, Gly321, Gln325, and Gly426. ADP is bound by residues Gly426 and Asn430.

The protein belongs to the FGGY kinase family.

It catalyses the reaction glycerol + ATP = sn-glycerol 3-phosphate + ADP + H(+). Its pathway is polyol metabolism; glycerol degradation via glycerol kinase pathway; sn-glycerol 3-phosphate from glycerol: step 1/1. Its activity is regulated as follows. Inhibited by fructose 1,6-bisphosphate (FBP). Functionally, key enzyme in the regulation of glycerol uptake and metabolism. Catalyzes the phosphorylation of glycerol to yield sn-glycerol 3-phosphate. This Verminephrobacter eiseniae (strain EF01-2) protein is Glycerol kinase.